The primary structure comprises 120 residues: Large ribosomal subunit protein bL20 (120 aa).

Belongs to the bacterial ribosomal protein bL20 family.

Its function is as follows. Binds directly to 23S ribosomal RNA and is necessary for the in vitro assembly process of the 50S ribosomal subunit. It is not involved in the protein synthesizing functions of that subunit. The chain is Large ribosomal subunit protein bL20 from Xanthobacter autotrophicus (strain ATCC BAA-1158 / Py2).